The primary structure comprises 616 residues: Chaperone protein HscA (616 aa).

It belongs to the heat shock protein 70 family.

Its function is as follows. Chaperone involved in the maturation of iron-sulfur cluster-containing proteins. Has a low intrinsic ATPase activity which is markedly stimulated by HscB. Involved in the maturation of IscU. In Escherichia fergusonii (strain ATCC 35469 / DSM 13698 / CCUG 18766 / IAM 14443 / JCM 21226 / LMG 7866 / NBRC 102419 / NCTC 12128 / CDC 0568-73), this protein is Chaperone protein HscA.